Reading from the N-terminus, the 417-residue chain is Serine hydroxymethyltransferase (417 aa).

(6S)-5,6,7,8-tetrahydrofolate-binding positions include L121 and 125–127 (GHL). K230 carries the post-translational modification N6-(pyridoxal phosphate)lysine. 355 to 357 (SPF) lines the (6S)-5,6,7,8-tetrahydrofolate pocket.

The protein belongs to the SHMT family. In terms of assembly, homodimer. It depends on pyridoxal 5'-phosphate as a cofactor.

The protein resides in the cytoplasm. It carries out the reaction (6R)-5,10-methylene-5,6,7,8-tetrahydrofolate + glycine + H2O = (6S)-5,6,7,8-tetrahydrofolate + L-serine. It functions in the pathway one-carbon metabolism; tetrahydrofolate interconversion. Its pathway is amino-acid biosynthesis; glycine biosynthesis; glycine from L-serine: step 1/1. Functionally, catalyzes the reversible interconversion of serine and glycine with tetrahydrofolate (THF) serving as the one-carbon carrier. This reaction serves as the major source of one-carbon groups required for the biosynthesis of purines, thymidylate, methionine, and other important biomolecules. Also exhibits THF-independent aldolase activity toward beta-hydroxyamino acids, producing glycine and aldehydes, via a retro-aldol mechanism. The chain is Serine hydroxymethyltransferase from Marinobacter nauticus (strain ATCC 700491 / DSM 11845 / VT8) (Marinobacter aquaeolei).